A 505-amino-acid chain; its full sequence is Probable folylpolyglutamate synthase (505 aa).

89–92 (GKGS) is a binding site for ATP. Mg(2+) contacts are provided by serine 121, glutamate 190, and histidine 218. The ATP site is built by arginine 332 and aspartate 346.

The protein belongs to the folylpolyglutamate synthase family. The cofactor is a monovalent cation.

The protein localises to the mitochondrion inner membrane. It localises to the mitochondrion matrix. Its subcellular location is the cytoplasm. The catalysed reaction is (6S)-5,6,7,8-tetrahydrofolyl-(gamma-L-Glu)(n) + L-glutamate + ATP = (6S)-5,6,7,8-tetrahydrofolyl-(gamma-L-Glu)(n+1) + ADP + phosphate + H(+). It participates in cofactor biosynthesis; tetrahydrofolylpolyglutamate biosynthesis. Catalyzes conversion of folates to polyglutamate derivatives allowing concentration of folate compounds in the cell and the intracellular retention of these cofactors, which are important substrates for most of the folate-dependent enzymes that are involved in one-carbon transfer reactions involved in purine, pyrimidine and amino acid synthesis. The chain is Probable folylpolyglutamate synthase (met7) from Schizosaccharomyces pombe (strain 972 / ATCC 24843) (Fission yeast).